The following is a 305-amino-acid chain: tRNA dimethylallyltransferase (305 aa).

8–15 (GPTGTGKS) contributes to the ATP binding site. 10 to 15 (TGTGKS) serves as a coordination point for substrate.

The protein belongs to the IPP transferase family. Monomer. Mg(2+) is required as a cofactor.

It catalyses the reaction adenosine(37) in tRNA + dimethylallyl diphosphate = N(6)-dimethylallyladenosine(37) in tRNA + diphosphate. Its function is as follows. Catalyzes the transfer of a dimethylallyl group onto the adenine at position 37 in tRNAs that read codons beginning with uridine, leading to the formation of N6-(dimethylallyl)adenosine (i(6)A). The sequence is that of tRNA dimethylallyltransferase from Mycobacterium sp. (strain KMS).